A 357-amino-acid polypeptide reads, in one-letter code: Peptide chain release factor 1 (357 aa).

Q232 carries the N5-methylglutamine modification. The segment covering 282 to 291 has biased composition (basic and acidic residues); that stretch reads KQRAEQEAAR. Residues 282–302 form a disordered region; the sequence is KQRAEQEAARRSQVGTGDRSE.

This sequence belongs to the prokaryotic/mitochondrial release factor family. Methylated by PrmC. Methylation increases the termination efficiency of RF1.

Its subcellular location is the cytoplasm. Its function is as follows. Peptide chain release factor 1 directs the termination of translation in response to the peptide chain termination codons UAG and UAA. The chain is Peptide chain release factor 1 from Solidesulfovibrio magneticus (strain ATCC 700980 / DSM 13731 / RS-1) (Desulfovibrio magneticus).